The sequence spans 436 residues: GTPase Der (436 aa).

EngA-type G domains lie at 4-167 (PVVA…PKEE) and 176-351 (VKFS…DNHS). Residues 10–17 (GRPNVGKS), 57–61 (DTGGI), 119–122 (NKVD), 182–189 (GRPNVGKS), 229–233 (DTAGM), and 294–297 (NKWD) contribute to the GTP site. The KH-like domain occupies 352–436 (LRVQSSMLND…PIRVIARKRK (85 aa)).

This sequence belongs to the TRAFAC class TrmE-Era-EngA-EngB-Septin-like GTPase superfamily. EngA (Der) GTPase family. In terms of assembly, associates with the 50S ribosomal subunit.

Its function is as follows. GTPase that plays an essential role in the late steps of ribosome biogenesis. This is GTPase Der from Listeria innocua serovar 6a (strain ATCC BAA-680 / CLIP 11262).